Here is an 85-residue protein sequence, read N- to C-terminus: Large ribosomal subunit protein bL27 (85 aa).

Residues 1–20 (MATKKAGGSTRNGRDSEAKR) form a disordered region.

Belongs to the bacterial ribosomal protein bL27 family.

In Glaesserella parasuis serovar 5 (strain SH0165) (Haemophilus parasuis), this protein is Large ribosomal subunit protein bL27.